The primary structure comprises 408 residues: Peptidase T (408 aa).

H78 provides a ligand contact to Zn(2+). Residue D80 is part of the active site. Position 141 (D141) interacts with Zn(2+). The active-site Proton acceptor is the E175. 3 residues coordinate Zn(2+): E176, D198, and H380.

This sequence belongs to the peptidase M20B family. Zn(2+) is required as a cofactor.

The protein localises to the cytoplasm. It carries out the reaction Release of the N-terminal residue from a tripeptide.. Functionally, cleaves the N-terminal amino acid of tripeptides. The protein is Peptidase T of Clostridium acetobutylicum (strain ATCC 824 / DSM 792 / JCM 1419 / IAM 19013 / LMG 5710 / NBRC 13948 / NRRL B-527 / VKM B-1787 / 2291 / W).